We begin with the raw amino-acid sequence, 53 residues long: UPF0391 membrane protein YtjA (53 aa).

The next 2 helical transmembrane spans lie at 4–24 (WGII…GGLA) and 30–48 (AAKI…SLFM).

Belongs to the UPF0391 family.

The protein resides in the cell membrane. The protein is UPF0391 membrane protein YtjA of Salmonella agona (strain SL483).